A 93-amino-acid polypeptide reads, in one-letter code: uncharacterized protein (93 aa).

Residues 35 to 72 (KSVPPPTPPKPVKKTPSPTLPKPSKQKQEPQVEVNEDR) form a disordered region. Residues 60-72 (QKQEPQVEVNEDR) show a composition bias toward basic and acidic residues.

This is an uncharacterized protein from Ostreid herpesvirus 1 (isolate France) (OsHV-1).